The following is a 165-amino-acid chain: Myosin regulatory light chain 2, ventricular/cardiac muscle isoform (165 aa).

Position 2 is a n,N,N-trimethylserine (Ser2). A Deamidated asparagine modification is found at Asn14. 2 positions are modified to phosphoserine: Ser15 and Ser19. 3 EF-hand domains span residues 24-59 (TQIQEFKEAFTIMDQNRDGFIDKNDLRDTFAALGRV), 94-129 (DPEETILNAFKVFDPEGKGVLKADYVREMLTTQAER), and 130-165 (FSKDEIDQMFAAFPPDVTGNLDYKNLVHIITHGEEK). Ca(2+) is bound by residues Asp37, Asn39, Asp41, and Asp48. Thr52 is modified (phosphothreonine).

Myosin is a hexamer of 2 heavy chains and 4 light chains. Interacts with MYOC. In terms of processing, N-terminus is methylated by METTL11A/NTM1. Post-translationally, phosphorylated by MYLK3 and MYLK2; promotes cardiac muscle contraction and function. Dephosphorylated by PPP1CB complexed to PPP1R12B. The phosphorylated form in adult is expressed as gradients across the heart from endocardium (low phosphorylation) to epicardium (high phosphorylation); regulates cardiac torsion and workload distribution.

The protein resides in the cytoplasm. The protein localises to the myofibril. It localises to the sarcomere. It is found in the a band. Its function is as follows. Contractile protein that plays a role in heart development and function. Following phosphorylation, plays a role in cross-bridge cycling kinetics and cardiac muscle contraction by increasing myosin lever arm stiffness and promoting myosin head diffusion; as a consequence of the increase in maximum contraction force and calcium sensitivity of contraction force. These events altogether slow down myosin kinetics and prolong duty cycle resulting in accumulated myosins being cooperatively recruited to actin binding sites to sustain thin filament activation as a means to fine-tune myofilament calcium sensitivity to force. During cardiogenesis plays an early role in cardiac contractility by promoting cardiac myofibril assembly. This is Myosin regulatory light chain 2, ventricular/cardiac muscle isoform from Oryctolagus cuniculus (Rabbit).